The following is a 133-amino-acid chain: uncharacterized protein (133 aa).

Residues lysine 82–glutamine 133 form a disordered region. Residues tyrosine 86–lysine 100 are compositionally biased toward polar residues. The segment covering glutamine 105–glutamine 133 has biased composition (low complexity).

This is an uncharacterized protein from Acidianus convivator (ABV).